The primary structure comprises 293 residues: Beta-lactamase (293 aa).

An N-terminal signal peptide occupies residues 1 to 27 (MRFTATVLSRVATGLALGLSMATASLA). Catalysis depends on S74, which acts as the Acyl-ester intermediate. 238–240 (KSG) is a binding site for substrate.

This sequence belongs to the class-A beta-lactamase family.

The protein localises to the periplasm. The enzyme catalyses a beta-lactam + H2O = a substituted beta-amino acid. Its function is as follows. Hydrolyzes beta-lactams antibiotics. Rates of hydrolysis relative to benzylpenicillin =100: ampicillin = 27, carbenicillin = 25, cloxacillin = 0, cephaloridine = 4. This Rhodobacter capsulatus (Rhodopseudomonas capsulata) protein is Beta-lactamase.